The chain runs to 496 residues: Angiopoietin-2 (496 aa).

The first 18 residues, 1–18 (MWQLVFFALSCDLVLAAA), serve as a signal peptide directing secretion. Residues N89, N119, N133, N151, N240, and N304 are each glycosylated (N-linked (GlcNAc...) asparagine). Residues 130–255 (NLLNQTAEQT…KQQHDLMETV (126 aa)) are a coiled coil. Positions 275 to 495 (KEEQIIFRDC…ATTMMIRPAD (221 aa)) constitute a Fibrinogen C-terminal domain. A disulfide bond links C284 and C313. 4 residues coordinate Ca(2+): D429, D431, C433, and C435. 2 cysteine pairs are disulfide-bonded: C433-C435 and C437-C450.

In terms of assembly, interacts with TEK/TIE2, competing for the same binding site as ANGPT1. Interacts with ITGA5. Interacts with SVEP1/polydom. Interacts with THBD; this interaction significantly inhibits the generation of activated PC and TAFIa/CPB2 by the thrombin/thrombomodulin complex.

The protein localises to the secreted. Functionally, binds to TEK/TIE2, competing for the ANGPT1 binding site, and modulating ANGPT1 signaling. Can induce tyrosine phosphorylation of TEK/TIE2 in the absence of ANGPT1. In the absence of angiogenic inducers, such as VEGF, ANGPT2-mediated loosening of cell-matrix contacts may induce endothelial cell apoptosis with consequent vascular regression. In concert with VEGF, it may facilitate endothelial cell migration and proliferation, thus serving as a permissive angiogenic signal. Involved in the regulation of lymphangiogenesis. This chain is Angiopoietin-2 (ANGPT2), found in Sus scrofa (Pig).